Consider the following 251-residue polypeptide: Probable transcriptional regulatory protein Swol_1435 (251 aa).

The interval 1-23 (MAGHSKWANIKHKKARSDEKRGK) is disordered.

Belongs to the TACO1 family.

The protein localises to the cytoplasm. The protein is Probable transcriptional regulatory protein Swol_1435 of Syntrophomonas wolfei subsp. wolfei (strain DSM 2245B / Goettingen).